A 1630-amino-acid chain; its full sequence is Separin (1630 aa).

Positions 1016–1037 (SKHSTGLKLCDSPRSSSMTPRG) are disordered. Positions 1443–1542 (EDNISMILNP…SAAMKYYGKL (100 aa)) constitute a Peptidase C50 domain. Cysteine 1531 is a catalytic residue.

In terms of assembly, may bind calcium. Interacts with PDS1. Interacts with MCD1.

It localises to the nucleus. It is found in the cytoplasm. Its subcellular location is the cytoskeleton. The protein localises to the microtubule organizing center. The protein resides in the spindle pole body. The catalysed reaction is All bonds known to be hydrolyzed by this endopeptidase have arginine in P1 and an acidic residue in P4. P6 is often occupied by an acidic residue or by a hydroxy-amino-acid residue, the phosphorylation of which enhances cleavage.. With respect to regulation, it is inactivated via its interaction with PDS1, which probably covers its active site. PDS1 degradation at anaphase, liberates it and triggers MCD1 cleavage. Caspase-like protease, which plays a central role in the chromosome segregation by cleaving the MCD1/SCC1 subunit of the cohesin complex at the onset of anaphase. During most of the cell cycle, it is inactivated by securin/PDS1 protein. It also promotes anaphase spindle elongation. A component of the FEAR (CDC14 early anaphase release) network which promotes CDC14 release from the nucleolus during early anaphase. Cleaves SLK19. In Saccharomyces cerevisiae (strain ATCC 204508 / S288c) (Baker's yeast), this protein is Separin (ESP1).